Here is a 319-residue protein sequence, read N- to C-terminus: Beta-ketoacyl-[acyl-carrier-protein] synthase III (319 aa).

Residues Cys115 and His246 contribute to the active site. The interval 247-251 (QANLR) is ACP-binding. Asn276 is an active-site residue.

This sequence belongs to the thiolase-like superfamily. FabH family. In terms of assembly, homodimer.

It is found in the cytoplasm. It catalyses the reaction malonyl-[ACP] + acetyl-CoA + H(+) = 3-oxobutanoyl-[ACP] + CO2 + CoA. The protein operates within lipid metabolism; fatty acid biosynthesis. Functionally, catalyzes the condensation reaction of fatty acid synthesis by the addition to an acyl acceptor of two carbons from malonyl-ACP. Catalyzes the first condensation reaction which initiates fatty acid synthesis and may therefore play a role in governing the total rate of fatty acid production. Possesses both acetoacetyl-ACP synthase and acetyl transacylase activities. Its substrate specificity determines the biosynthesis of branched-chain and/or straight-chain of fatty acids. This chain is Beta-ketoacyl-[acyl-carrier-protein] synthase III, found in Coxiella burnetii (strain RSA 331 / Henzerling II).